The primary structure comprises 455 residues: Probable glycine dehydrogenase (decarboxylating) subunit 1 (455 aa).

Belongs to the GcvP family. N-terminal subunit subfamily. The glycine cleavage system is composed of four proteins: P, T, L and H. In this organism, the P 'protein' is a heterodimer of two subunits.

It catalyses the reaction N(6)-[(R)-lipoyl]-L-lysyl-[glycine-cleavage complex H protein] + glycine + H(+) = N(6)-[(R)-S(8)-aminomethyldihydrolipoyl]-L-lysyl-[glycine-cleavage complex H protein] + CO2. In terms of biological role, the glycine cleavage system catalyzes the degradation of glycine. The P protein binds the alpha-amino group of glycine through its pyridoxal phosphate cofactor; CO(2) is released and the remaining methylamine moiety is then transferred to the lipoamide cofactor of the H protein. This Saccharolobus islandicus (strain Y.G.57.14 / Yellowstone #1) (Sulfolobus islandicus) protein is Probable glycine dehydrogenase (decarboxylating) subunit 1.